Consider the following 279-residue polypeptide: MLMSMGFVVAAFYRFVHLHNYYDMRSVILEFCQEHGIKGTVILAEQGINATISGERDAINKFFSFLDLDHRLADMKYHESYSSRLPFSKMKVRLKKEVVRLGIDDFDCSSMRGEYVDPKAWNDLITKPGMHVIDTRNDYEIKFGRFKHSINPGTTSFREFPDWARKWAEGKDKDVGVAMYCTGGIRCEKSTAFLKSLGFENVYHLKGGILNYLQSVKGADSLWEGDCFVFDERVAVDNNIAPSEDIKCVKCFGKVDEADLRSVSKGHIVCGACKSADVS.

Positions 126–221 constitute a Rhodanese domain; the sequence is TKPGMHVIDT…YLQSVKGADS (96 aa). The active-site Cysteine persulfide intermediate is the cysteine 181.

The protein belongs to the TrhO family.

The enzyme catalyses uridine(34) in tRNA + AH2 + O2 = 5-hydroxyuridine(34) in tRNA + A + H2O. Its function is as follows. Catalyzes oxygen-dependent 5-hydroxyuridine (ho5U) modification at position 34 in tRNAs. The polypeptide is tRNA uridine(34) hydroxylase (Anaplasma phagocytophilum (strain HZ)).